The sequence spans 258 residues: Gamma-secretase subunit Aph-1b (258 aa).

7 helical membrane passes run 3-23 (VAVF…LFMF), 32-52 (VIFL…SSLV), 70-90 (GLLI…RYGY), 118-138 (AYVS…VNIL), 161-181 (AFMT…FFEA), 187-207 (WWAL…TFVN), and 214-234 (LIPT…CAGG).

This sequence belongs to the APH-1 family. Component of the gamma-secretase complex, a complex composed of a presenilin homodimer (PSEN1 or PSEN2), nicastrin (NCSTN), APH1 and PEN2.

The protein resides in the membrane. In terms of biological role, essential subunit of the gamma-secretase complex, an endoprotease complex that catalyzes the intramembrane cleavage of integral proteins such as Notch receptors. It may represent a stabilizing cofactor for the presenilin homodimer that promotes the formation of a stable complex. This chain is Gamma-secretase subunit Aph-1b (aph1b), found in Danio rerio (Zebrafish).